Consider the following 279-residue polypeptide: Apolipoprotein L domain-containing protein 1 (279 aa).

A run of 3 helical transmembrane segments spans residues 83-105, 122-142, and 192-212; these read SLVA…IVGL, GLGV…SLIF, and IALY…FLIP. The stretch at 226–253 forms a coiled coil; it reads LKAKIQKLAESLESCTGALDELSEQLES.

This sequence belongs to the apolipoprotein L family. Expressed in neonatal dermal microvascular endothelial cells.

The protein localises to the cell membrane. It localises to the cell junction. It is found in the cytoplasmic vesicle. The protein resides in the secretory vesicle. Functionally, is a modulator of endothelial barrier permeability, required for proper organization of endothelial cell-cell junctions and cytoskeleton. It also plays a role in the modulation of secretory autophagy. May affect blood-brain barrier permeability. The protein is Apolipoprotein L domain-containing protein 1 (APOLD1) of Homo sapiens (Human).